The chain runs to 337 residues: Probable deoxyhypusine synthase (337 aa).

Lysine 308 functions as the Nucleophile in the catalytic mechanism.

The protein belongs to the deoxyhypusine synthase family. It depends on NAD(+) as a cofactor.

The enzyme catalyses [eIF5A protein]-L-lysine + spermidine = [eIF5A protein]-deoxyhypusine + propane-1,3-diamine. The protein operates within protein modification; eIF5A hypusination. Functionally, catalyzes the NAD-dependent oxidative cleavage of spermidine and the subsequent transfer of the butylamine moiety of spermidine to the epsilon-amino group of a specific lysine residue of the eIF-5A precursor protein to form the intermediate deoxyhypusine residue. The protein is Probable deoxyhypusine synthase of Thermococcus kodakarensis (strain ATCC BAA-918 / JCM 12380 / KOD1) (Pyrococcus kodakaraensis (strain KOD1)).